Reading from the N-terminus, the 84-residue chain is uncharacterized protein (84 aa).

Residues 7–23 (AFSGVIALYGGYLYLRL) form a helical membrane-spanning segment.

The protein localises to the membrane. This is an uncharacterized protein from Haemophilus influenzae (strain ATCC 51907 / DSM 11121 / KW20 / Rd).